Here is a 359-residue protein sequence, read N- to C-terminus: MAP kinase-activated protein kinase 2 (359 aa).

In terms of domain architecture, Protein kinase spans 20-281 (VTSNTVLGYG…IQDVISNKWI (262 aa)). Residues 26-34 (LGYGINGKV) and Lys49 each bind ATP. The Proton acceptor role is filled by Asp142.

It belongs to the protein kinase superfamily. CAMK Ser/Thr protein kinase family. In terms of processing, phosphorylated and activated by MAP kinase.

It catalyses the reaction L-seryl-[protein] + ATP = O-phospho-L-seryl-[protein] + ADP + H(+). The catalysed reaction is L-threonyl-[protein] + ATP = O-phospho-L-threonyl-[protein] + ADP + H(+). Functionally, its physiological substrate seems to be the small heat shock protein (HSP27/HSP25). The sequence is that of MAP kinase-activated protein kinase 2 (MAPk-Ak2) from Drosophila melanogaster (Fruit fly).